The primary structure comprises 309 residues: Ribosomal RNA small subunit methyltransferase H (309 aa).

Residues 33–35, D53, F79, D100, and Q107 contribute to the S-adenosyl-L-methionine site; that span reads GGH.

It belongs to the methyltransferase superfamily. RsmH family.

It is found in the cytoplasm. It catalyses the reaction cytidine(1402) in 16S rRNA + S-adenosyl-L-methionine = N(4)-methylcytidine(1402) in 16S rRNA + S-adenosyl-L-homocysteine + H(+). Its function is as follows. Specifically methylates the N4 position of cytidine in position 1402 (C1402) of 16S rRNA. The polypeptide is Ribosomal RNA small subunit methyltransferase H (Clostridium botulinum (strain Okra / Type B1)).